Reading from the N-terminus, the 75-residue chain is MLELNKRKEEAKVAKEQKVKAIVRTYYVIEGNKVKLKNKKCPRCGSIMAHHLKPNERWSCGKCGYTEFIGASKKR.

The Zn(2+) site is built by cysteine 41, cysteine 44, cysteine 60, and cysteine 63. The C4-type zinc-finger motif lies at 41 to 63 (CPRCGSIMAHHLKPNERWSCGKC).

Belongs to the eukaryotic ribosomal protein eS31 family. Part of the 30S ribosomal subunit. The cofactor is Zn(2+).

The chain is Small ribosomal subunit protein eS31 from Saccharolobus solfataricus (strain ATCC 35092 / DSM 1617 / JCM 11322 / P2) (Sulfolobus solfataricus).